The chain runs to 137 residues: Small ribosomal subunit protein uS12 (137 aa).

Residues 1–57 (MPTINQLVRKPRKSKVEKSKSPALNVGYNSHKKVQTNVSSPQKRGVATRVGTMTPKK) form a disordered region. Aspartate 102 is modified (3-methylthioaspartic acid).

It belongs to the universal ribosomal protein uS12 family. In terms of assembly, part of the 30S ribosomal subunit. Contacts proteins S8 and S17. May interact with IF1 in the 30S initiation complex.

Its function is as follows. With S4 and S5 plays an important role in translational accuracy. In terms of biological role, interacts with and stabilizes bases of the 16S rRNA that are involved in tRNA selection in the A site and with the mRNA backbone. Located at the interface of the 30S and 50S subunits, it traverses the body of the 30S subunit contacting proteins on the other side and probably holding the rRNA structure together. The combined cluster of proteins S8, S12 and S17 appears to hold together the shoulder and platform of the 30S subunit. This is Small ribosomal subunit protein uS12 from Streptococcus pneumoniae serotype 2 (strain D39 / NCTC 7466).